The chain runs to 101 residues: Putative membrane protein insertion efficiency factor (101 aa).

Belongs to the UPF0161 family.

The protein localises to the cell membrane. In terms of biological role, could be involved in insertion of integral membrane proteins into the membrane. The polypeptide is Putative membrane protein insertion efficiency factor (Lacticaseibacillus casei (strain BL23) (Lactobacillus casei)).